The following is a 305-amino-acid chain: tRNA pseudouridine synthase B (305 aa).

The Nucleophile role is filled by Asp-48.

The protein belongs to the pseudouridine synthase TruB family. Type 1 subfamily.

The catalysed reaction is uridine(55) in tRNA = pseudouridine(55) in tRNA. Its function is as follows. Responsible for synthesis of pseudouridine from uracil-55 in the psi GC loop of transfer RNAs. In Pseudomonas putida (strain GB-1), this protein is tRNA pseudouridine synthase B.